A 675-amino-acid polypeptide reads, in one-letter code: DNA ligase (675 aa).

NAD(+)-binding positions include 33–37 (DAEYD), 82–83 (SL), and Glu-114. Residue Lys-116 is the N6-AMP-lysine intermediate of the active site. The NAD(+) site is built by Arg-137, Glu-174, Lys-291, and Lys-315. Residues Cys-409, Cys-412, Cys-427, and Cys-433 each coordinate Zn(2+). The BRCT domain maps to 595-675 (AGDNPFAGKT…EMIRLLDQSK (81 aa)).

It belongs to the NAD-dependent DNA ligase family. LigA subfamily. Mg(2+) serves as cofactor. Mn(2+) is required as a cofactor.

It catalyses the reaction NAD(+) + (deoxyribonucleotide)n-3'-hydroxyl + 5'-phospho-(deoxyribonucleotide)m = (deoxyribonucleotide)n+m + AMP + beta-nicotinamide D-nucleotide.. In terms of biological role, DNA ligase that catalyzes the formation of phosphodiester linkages between 5'-phosphoryl and 3'-hydroxyl groups in double-stranded DNA using NAD as a coenzyme and as the energy source for the reaction. It is essential for DNA replication and repair of damaged DNA. This Proteus mirabilis (strain HI4320) protein is DNA ligase.